A 125-amino-acid polypeptide reads, in one-letter code: Phosphoribosyl-AMP cyclohydrolase (125 aa).

A Mg(2+)-binding site is contributed by D74. C75 serves as a coordination point for Zn(2+). Mg(2+) contacts are provided by D76 and D78. C92 and C99 together coordinate Zn(2+).

It belongs to the PRA-CH family. In terms of assembly, homodimer. Mg(2+) is required as a cofactor. Requires Zn(2+) as cofactor.

It is found in the cytoplasm. It carries out the reaction 1-(5-phospho-beta-D-ribosyl)-5'-AMP + H2O = 1-(5-phospho-beta-D-ribosyl)-5-[(5-phospho-beta-D-ribosylamino)methylideneamino]imidazole-4-carboxamide. It participates in amino-acid biosynthesis; L-histidine biosynthesis; L-histidine from 5-phospho-alpha-D-ribose 1-diphosphate: step 3/9. Functionally, catalyzes the hydrolysis of the adenine ring of phosphoribosyl-AMP. This Syntrophotalea carbinolica (strain DSM 2380 / NBRC 103641 / GraBd1) (Pelobacter carbinolicus) protein is Phosphoribosyl-AMP cyclohydrolase.